Consider the following 760-residue polypeptide: Polyribonucleotide nucleotidyltransferase (760 aa).

Positions 492 and 498 each coordinate Mg(2+). Positions 559 to 618 constitute a KH domain; sequence PQHAEVFVNPDIIRIIIGPGGKNIKAITATTGASIDIEDSGRVSIFAPTLEAMEMAREMV. The S1 motif domain maps to 628–702; sequence GKNYTGKVRK…SRKAVLLEEQ (75 aa). The tract at residues 706-760 is disordered; that stretch reads WKPEDTARPSGPREGGRRDGGRDGRRDGGRDGRRDGGRDGGRRDGGRRDGGRDRN. Basic and acidic residues predominate over residues 719–760; that stretch reads EGGRRDGGRDGRRDGGRDGRRDGGRDGGRRDGGRRDGGRDRN.

Belongs to the polyribonucleotide nucleotidyltransferase family. Mg(2+) serves as cofactor.

Its subcellular location is the cytoplasm. The catalysed reaction is RNA(n+1) + phosphate = RNA(n) + a ribonucleoside 5'-diphosphate. Involved in mRNA degradation. Catalyzes the phosphorolysis of single-stranded polyribonucleotides processively in the 3'- to 5'-direction. The sequence is that of Polyribonucleotide nucleotidyltransferase from Nitratidesulfovibrio vulgaris (strain ATCC 29579 / DSM 644 / CCUG 34227 / NCIMB 8303 / VKM B-1760 / Hildenborough) (Desulfovibrio vulgaris).